A 178-amino-acid chain; its full sequence is Inorganic pyrophosphatase (178 aa).

The substrate site is built by Lys-31, Arg-45, and Tyr-57. Mg(2+) contacts are provided by Asp-67, Asp-72, and Asp-104. Substrate is bound at residue Tyr-141.

This sequence belongs to the PPase family. Homohexamer. Mg(2+) is required as a cofactor.

The protein localises to the cytoplasm. The enzyme catalyses diphosphate + H2O = 2 phosphate + H(+). Its function is as follows. Catalyzes the hydrolysis of inorganic pyrophosphate (PPi) forming two phosphate ions. The protein is Inorganic pyrophosphatase of Leptospira interrogans serogroup Icterohaemorrhagiae serovar copenhageni (strain Fiocruz L1-130).